The chain runs to 90 residues: Small ribosomal subunit protein bS20 (90 aa).

The disordered stretch occupies residues 1 to 29; sequence MANTASAEKRNRQAQKRRARNVQVRTGVK.

The protein belongs to the bacterial ribosomal protein bS20 family.

Its function is as follows. Binds directly to 16S ribosomal RNA. The chain is Small ribosomal subunit protein bS20 from Anaeromyxobacter sp. (strain Fw109-5).